Here is a 475-residue protein sequence, read N- to C-terminus: Lipoprotein lipase (475 aa).

The N-terminal stretch at 1–27 (MESKALLLLALAVWLQSLTASRGGVAA) is a signal peptide. The interaction with GPIHBP1 stretch occupies residues 32 to 53 (RDFIDIESKFALRTPEDTAEDT). Cysteines 54 and 67 form a disulfide. Asparagine 70 is a glycosylation site (N-linked (GlcNAc...) asparagine). At tyrosine 121 the chain carries 3'-nitrotyrosine. Serine 159 serves as the catalytic Nucleophile. Aspartate 183 functions as the Charge relay system in the catalytic mechanism. The residue at position 191 (tyrosine 191) is a 3'-nitrotyrosine. 4 residues coordinate Ca(2+): alanine 194, arginine 197, serine 199, and aspartate 202. Cysteine 243 and cysteine 266 are disulfide-bonded. The essential for determining substrate specificity stretch occupies residues 243 to 266 (CNIGEAIRVIAERGLGDVDQLVKC). The Charge relay system role is filled by histidine 268. 2 cysteine pairs are disulfide-bonded: cysteine 291–cysteine 310 and cysteine 302–cysteine 305. Residues 341-464 (FHYQVKIHFS…KGKAPAVFVK (124 aa)) form the PLAT domain. At tyrosine 343 the chain carries 3'-nitrotyrosine. An N-linked (GlcNAc...) asparagine glycan is attached at asparagine 386. An important for interaction with lipoprotein particles region spans residues 417 to 421 (WSDWW). The interval 430 to 434 (KIRVK) is important for heparin binding. Residues 443-467 (IFCSREKVSHLQKGKAPAVFVKCHD) are interaction with GPIHBP1. A disulfide bridge links cysteine 445 with cysteine 465.

It belongs to the AB hydrolase superfamily. Lipase family. Homodimer. Interacts with GPIHBP1 with 1:1 stoichiometry. Interacts with APOC2; the interaction activates LPL activity in the presence of lipids. Interaction with heparan sulfate proteoglycans is required to protect LPL against loss of activity. Associates with lipoprotein particles in blood plasma. Interacts with LMF1 and SEL1L; interaction with SEL1L is required to prevent aggregation of newly synthesized LPL in the endoplasmic reticulum (ER), and for normal export of LPL from the ER to the extracellular space. Interacts with SORL1; SORL1 acts as a sorting receptor, promoting LPL localization to endosomes and later to lysosomes, leading to degradation of newly synthesized LPL. In terms of processing, tyrosine nitration after lipopolysaccharide (LPS) challenge down-regulates the lipase activity. As to expression, highest levels in the spinal cord.

The protein localises to the cell membrane. The protein resides in the secreted. Its subcellular location is the extracellular space. It localises to the extracellular matrix. It carries out the reaction a triacylglycerol + H2O = a diacylglycerol + a fatty acid + H(+). It catalyses the reaction a 1,2-diacyl-sn-glycero-3-phosphocholine + H2O = a 2-acyl-sn-glycero-3-phosphocholine + a fatty acid + H(+). The catalysed reaction is 1,2,3-tri-(9Z-octadecenoyl)-glycerol + H2O = di-(9Z)-octadecenoylglycerol + (9Z)-octadecenoate + H(+). The enzyme catalyses 1,2-di-(9Z-octadecenoyl)-sn-glycero-3-phosphocholine + H2O = (9Z-octadecenoyl)-sn-glycero-3-phosphocholine + (9Z)-octadecenoate + H(+). It carries out the reaction 1,2,3-tributanoylglycerol + H2O = dibutanoylglycerol + butanoate + H(+). It catalyses the reaction 1,2-dihexadecanoyl-sn-glycero-3-phosphocholine + H2O = hexadecanoyl-sn-glycero-3-phosphocholine + hexadecanoate + H(+). The apolipoprotein APOC2 acts as a coactivator of LPL activity. Ca(2+) binding promotes protein stability and formation of the active homodimer. Interaction with GPIHBP1 protects LPL against inactivation by ANGPTL4. Key enzyme in triglyceride metabolism. Catalyzes the hydrolysis of triglycerides from circulating chylomicrons and very low density lipoproteins (VLDL), and thereby plays an important role in lipid clearance from the blood stream, lipid utilization and storage. Although it has both phospholipase and triglyceride lipase activities it is primarily a triglyceride lipase with low but detectable phospholipase activity. Mediates margination of triglyceride-rich lipoprotein particles in capillaries. Recruited to its site of action on the luminal surface of vascular endothelium by binding to GPIHBP1 and cell surface heparan sulfate proteoglycans. The protein is Lipoprotein lipase (LPL) of Papio anubis (Olive baboon).